A 33-amino-acid chain; its full sequence is Actin (33 aa).

This sequence belongs to the actin family.

The protein localises to the cytoplasm. It localises to the cytoskeleton. It catalyses the reaction ATP + H2O = ADP + phosphate + H(+). Functionally, actins are highly conserved proteins that are involved in various types of cell motility and are ubiquitously expressed in all eukaryotic cells. The chain is Actin from Dictyocaulus viviparus (Bovine lungworm).